A 418-amino-acid chain; its full sequence is Glutamyl-tRNA(Gln) amidotransferase subunit D (418 aa).

Residues 74 to 405 (KNISILSTGG…KEAKELMSKN (332 aa)) enclose the Asparaginase/glutaminase domain. Catalysis depends on residues Thr84, Thr160, Asp161, and Lys237.

This sequence belongs to the asparaginase 1 family. GatD subfamily. As to quaternary structure, heterodimer of GatD and GatE.

It catalyses the reaction L-glutamyl-tRNA(Gln) + L-glutamine + ATP + H2O = L-glutaminyl-tRNA(Gln) + L-glutamate + ADP + phosphate + H(+). Allows the formation of correctly charged Gln-tRNA(Gln) through the transamidation of misacylated Glu-tRNA(Gln) in organisms which lack glutaminyl-tRNA synthetase. The reaction takes place in the presence of glutamine and ATP through an activated gamma-phospho-Glu-tRNA(Gln). The GatDE system is specific for glutamate and does not act on aspartate. The protein is Glutamyl-tRNA(Gln) amidotransferase subunit D of Methanococcus maripaludis (strain DSM 14266 / JCM 13030 / NBRC 101832 / S2 / LL).